Reading from the N-terminus, the 1215-residue chain is Homeodomain-interacting protein kinase 3 (1215 aa).

A Glycyl lysine isopeptide (Lys-Gly) (interchain with G-Cter in SUMO2) cross-link involves residue Lys27. Residues 197 to 525 (YEVLDFLGRG…PAETLNHPFV (329 aa)) form the Protein kinase domain. ATP-binding positions include 203–211 (LGRGTFGQV) and Lys226. Residue Asp322 is the Proton acceptor of the active site. Tyr359 bears the Phosphotyrosine mark. Residues 767 to 944 (QNRGILVKLM…NSMSDEEQES (178 aa)) are interaction with AR. Positions 796–891 (NTNIPHSAFI…SQRHSLRECK (96 aa)) are interaction with FAS. The required for localization to nuclear speckles stretch occupies residues 855 to 1011 (QTIIIADSPS…ENGLNADEHM (157 aa)). The segment at 866 to 918 (AVSVITISSDTDEEETSQRHSLRECKGSLDCEACQSTLNIDRMCSLSSPDSTL) is SUMO interaction motifs (SIM); required for nuclear localization and kinase activity. The interaction with UBL1 stretch occupies residues 870-880 (ITISSDTDEEE). Positions 912–929 (SSPDSTLSTSSSGQSSPS) are enriched in low complexity. Residues 912–987 (SSPDSTLSTS…ELVSSADTET (76 aa)) form a disordered region. A compositionally biased stretch (polar residues) spans 945-957 (SCDTVDGSPTSDS). Lys1208 is covalently cross-linked (Glycyl lysine isopeptide (Lys-Gly) (interchain with G-Cter in SUMO)).

It belongs to the protein kinase superfamily. CMGC Ser/Thr protein kinase family. HIPK subfamily. In terms of assembly, interacts with Nkx1-2. Interacts with FAS and DAXX. Probably part of a complex consisting of HIPK3, FAS and FADD. Interacts with and stabilizes ligand-bound androgen receptor (AR). Interacts with UBL1/SUMO-1. Binds to NR5A1/SF1, SPEN/MINT and RUNX2. Post-translationally, autophosphorylated, but autophosphorylation is not required for catalytic activity. May be sumoylated. Overexpressed in multidrug resistant cells. Highly expressed in heart and skeletal muscle, and at lower levels in placenta, pancreas, brain, spleen, prostate, thymus, testis, small intestine, colon and leukocytes. Not found in liver and lung.

Its subcellular location is the cytoplasm. The protein localises to the nucleus. It catalyses the reaction L-seryl-[protein] + ATP = O-phospho-L-seryl-[protein] + ADP + H(+). It carries out the reaction L-threonyl-[protein] + ATP = O-phospho-L-threonyl-[protein] + ADP + H(+). Its function is as follows. Serine/threonine-protein kinase involved in transcription regulation, apoptosis and steroidogenic gene expression. Phosphorylates JUN and RUNX2. Seems to negatively regulate apoptosis by promoting FADD phosphorylation. Enhances androgen receptor-mediated transcription. May act as a transcriptional corepressor for NK homeodomain transcription factors. The phosphorylation of NR5A1 activates SF1 leading to increased steroidogenic gene expression upon cAMP signaling pathway stimulation. In osteoblasts, supports transcription activation: phosphorylates RUNX2 that synergizes with SPEN/MINT to enhance FGFR2-mediated activation of the osteocalcin FGF-responsive element (OCFRE). The sequence is that of Homeodomain-interacting protein kinase 3 (HIPK3) from Homo sapiens (Human).